The following is a 165-amino-acid chain: E3 ubiquitin-protein ligase RNF181 (165 aa).

Residues cysteine 88–arginine 129 form an RING-type; atypical zinc finger. The segment at aspartate 136 to threonine 165 is disordered. Phosphothreonine is present on threonine 165.

It belongs to the RNF181 family. Directly interacts with ITGA2B and, as a result, with integrin ITGA2B/ITGB3. There is no evidence that integrin ITGA2B/ITGB3 is an endogenous substrate for RNF181-directed ubiquitination. In terms of processing, auto-ubiquitinated as part of the enzymatic reaction.

It catalyses the reaction S-ubiquitinyl-[E2 ubiquitin-conjugating enzyme]-L-cysteine + [acceptor protein]-L-lysine = [E2 ubiquitin-conjugating enzyme]-L-cysteine + N(6)-ubiquitinyl-[acceptor protein]-L-lysine.. The protein operates within protein modification; protein ubiquitination. E3 ubiquitin-protein ligase which accepts ubiquitin from an E2 ubiquitin-conjugating enzyme in the form of a thioester and then directly transfers the ubiquitin to targeted substrates. Catalyzes monoubiquitination of 26S proteasome subunit PSMC2/RPT1. The polypeptide is E3 ubiquitin-protein ligase RNF181 (Mus musculus (Mouse)).